The primary structure comprises 440 residues: KH domain-containing protein 3 (440 aa).

The interval 1–39 (MASLKRFQTLVPLDHKQGTLFEIIGEPKLPKWFHVECLE) is involved in RNA binding. The KH; atypical domain occupies 40–118 (DPKRLYVEPR…CRMKLMEIEA (79 aa)). A disordered region spans residues 132-201 (KAATQPAPVK…EVREAATEQA (70 aa)). A Phosphoserine; by ATR modification is found at S151. A phosphothreonine mark is found at T274 and T286. The required for interaction with NUMA1 and regulation of apoptosis in response to DNA damage stretch occupies residues 341–440 (VREAATQLSP…RDAWESFIIL (100 aa)). S349 bears the Phosphoserine mark.

It belongs to the KHDC1 family. In terms of assembly, component of the subcortical maternal complex (SCMC), at least composed of NLRP5, KHDC3, OOEP, and TLE6. Within the complex, interacts with NLRP5, OOEP and TLE6. The SCMC may facilitate translocation of its components between the nuclear and cytoplasmic compartments. Forms a scaffold complex with OOEP/FLOPED, and interacts with BLM and TRIM25 at DNA replication forks. Interacts with PARP1; the interaction is increased following the formation of DNA double-strand breaks. Interacts (via C-terminus) with NUMA1. Post-translationally, phosphorylation at Ser-151 is required to promote stalled fork restart. As to expression, detected in ovary, but not in testis or somatic tissues. In the ovary, expressed in growing oocytes.

It localises to the cytoplasm. The protein resides in the cell cortex. It is found in the nucleus. The protein localises to the mitochondrion. Its subcellular location is the cytoskeleton. It localises to the microtubule organizing center. The protein resides in the centrosome. It is found in the chromosome. Its function is as follows. Component of the subcortical maternal complex (SCMC), a multiprotein complex that plays a key role in early embryonic development. The SCMC complex is a structural constituent of cytoplasmic lattices, which consist in fibrous structures found in the cytoplasm of oocytes and preimplantation embryos. They are required to store maternal proteins critical for embryonic development, such as proteins that control epigenetic reprogramming of the preimplantation embryo, and prevent their degradation or activation. KHDC3 ensures proper spindle assembly by regulating the localization of AURKA via RHOA signaling and of PLK1 via a RHOA-independent process. Required for the localization of MAD2L1 to kinetochores to enable spindle assembly checkpoint function. As part of the OOEP-KHDC3 scaffold, recruits BLM and TRIM25 to DNA replication forks, thereby promoting the ubiquitination of BLM by TRIM25, enhancing BLM retainment at replication forks and therefore promoting stalled replication fork restart. Regulates homologous recombination-mediated DNA repair via recruitment of RAD51 to sites of DNA double-strand breaks, and sustainment of PARP1 activity, which in turn modulates downstream ATM or ATR activation. Activation of ATM or ATR in response to DNA double-strand breaks may be cell-type specific. Its role in DNA double-strand break repair is independent of its role in restarting stalled replication forks. Promotes neural stem cell neurogenesis and neuronal differentiation in the hippocampus. May regulate normal development of learning, memory and anxiety. Capable of binding RNA. The chain is KH domain-containing protein 3 from Mus musculus (Mouse).